A 264-amino-acid chain; its full sequence is 3-methyl-2-oxobutanoate hydroxymethyltransferase (264 aa).

Positions 45 and 84 each coordinate Mg(2+). Residues 45–46 (DS), aspartate 84, and lysine 112 contribute to the 3-methyl-2-oxobutanoate site. Position 114 (glutamate 114) interacts with Mg(2+). Residue glutamate 181 is the Proton acceptor of the active site.

This sequence belongs to the PanB family. As to quaternary structure, homodecamer; pentamer of dimers. Mg(2+) is required as a cofactor.

It localises to the cytoplasm. The enzyme catalyses 3-methyl-2-oxobutanoate + (6R)-5,10-methylene-5,6,7,8-tetrahydrofolate + H2O = 2-dehydropantoate + (6S)-5,6,7,8-tetrahydrofolate. It functions in the pathway cofactor biosynthesis; (R)-pantothenate biosynthesis; (R)-pantoate from 3-methyl-2-oxobutanoate: step 1/2. Its function is as follows. Catalyzes the reversible reaction in which hydroxymethyl group from 5,10-methylenetetrahydrofolate is transferred onto alpha-ketoisovalerate to form ketopantoate. The protein is 3-methyl-2-oxobutanoate hydroxymethyltransferase of Escherichia coli O157:H7.